A 50-amino-acid chain; its full sequence is Large ribosomal subunit protein bL33 (50 aa).

It belongs to the bacterial ribosomal protein bL33 family.

In Fusobacterium nucleatum subsp. nucleatum (strain ATCC 25586 / DSM 15643 / BCRC 10681 / CIP 101130 / JCM 8532 / KCTC 2640 / LMG 13131 / VPI 4355), this protein is Large ribosomal subunit protein bL33.